The primary structure comprises 442 residues: Vitellogenin-2 (442 aa).

The signal sequence occupies residues 1-19; the sequence is MNPLRTLCVMACLLAVAMG. A compositionally biased stretch (low complexity) spans 21-33; it reads PQSGNRSGRRSNS. The segment at 21–44 is disordered; sequence PQSGNRSGRRSNSLDNVEQPSNWV. Phosphoserine occurs at positions 31 and 33. The segment covering 34-44 has biased composition (polar residues); sequence LDNVEQPSNWV. The residue at position 82 (Ser82) is a Phosphoserine. Disordered regions lie at residues 165–200 and 408–442; these read QPYE…QDDT and KSPF…SRRQ. Thr170 bears the Phosphothreonine mark. Sulfotyrosine is present on Tyr172. Phosphoserine occurs at positions 173, 178, 181, 182, and 183. Low complexity-rich tracts occupy residues 175-186 and 431-442; these read EEQSQRSSSEEQ and RQSSSNQGSRRQ.

This sequence belongs to the AB hydrolase superfamily. Lipase family. In terms of processing, tyrosine sulfation occurs in the female only and plays an essential functional role. In terms of tissue distribution, synthesized in the fat body and ovarian follicle cells and accumulate in the oocyte.

It localises to the secreted. Vitellogenin is the major yolk protein of eggs where it is used as a food source during embryogenesis. Vitellogenins and their receptor yl/yolkless are required for maintenance of microtubule plus-end orientation towards the posterior pole of oocytes. Involved in polarized localization of germ plasm components, such as osk mRNA and vas protein, to the oocyte posterior cortex. Receptor-mediated endocytosis by yl/yolkless is crucial for actin reorganization, mediated by osk isoform A/Long, required to anchor germ plasm components to the oocyte cortex. The chain is Vitellogenin-2 (Yp2) from Drosophila melanogaster (Fruit fly).